Here is a 361-residue protein sequence, read N- to C-terminus: Transmembrane protein 116 (361 aa).

The next 7 membrane-spanning stretches (helical) occupy residues 29–49 (WIQM…ILYA), 64–84 (FLLS…GLLF), 103–123 (TLYM…YTGL), 147–167 (LGPV…FVAG), 210–230 (CMAI…IFMG), 261–281 (MVLY…LATM), and 295–315 (VALY…NCLV).

It is found in the membrane. The chain is Transmembrane protein 116 (tmem116) from Danio rerio (Zebrafish).